A 79-amino-acid polypeptide reads, in one-letter code: ATP synthase subunit c (79 aa).

Transmembrane regions (helical) follow at residues 11 to 31 (MAAAIMMGLAAIGAAIGIGIL) and 53 to 73 (FFIVMGLVDAIPMIAVGLGLY).

Belongs to the ATPase C chain family. As to quaternary structure, F-type ATPases have 2 components, F(1) - the catalytic core - and F(0) - the membrane proton channel. F(1) has five subunits: alpha(3), beta(3), gamma(1), delta(1), epsilon(1). F(0) has three main subunits: a(1), b(2) and c(10-14). The alpha and beta chains form an alternating ring which encloses part of the gamma chain. F(1) is attached to F(0) by a central stalk formed by the gamma and epsilon chains, while a peripheral stalk is formed by the delta and b chains.

It is found in the cell inner membrane. Its function is as follows. F(1)F(0) ATP synthase produces ATP from ADP in the presence of a proton or sodium gradient. F-type ATPases consist of two structural domains, F(1) containing the extramembraneous catalytic core and F(0) containing the membrane proton channel, linked together by a central stalk and a peripheral stalk. During catalysis, ATP synthesis in the catalytic domain of F(1) is coupled via a rotary mechanism of the central stalk subunits to proton translocation. Key component of the F(0) channel; it plays a direct role in translocation across the membrane. A homomeric c-ring of between 10-14 subunits forms the central stalk rotor element with the F(1) delta and epsilon subunits. The protein is ATP synthase subunit c of Proteus mirabilis (strain HI4320).